Consider the following 328-residue polypeptide: Transcription factor bHLH25 (328 aa).

Residues Pro125–Asp152 are disordered. Residues Ser148–Leu197 form the bHLH domain.

As to quaternary structure, homodimer. Expressed in flowers.

Its subcellular location is the nucleus. This Arabidopsis thaliana (Mouse-ear cress) protein is Transcription factor bHLH25 (BHLH25).